Consider the following 534-residue polypeptide: Zinc finger protein 397 (534 aa).

Ser31 is modified (phosphoserine). One can recognise an SCAN box domain in the interval 50 to 132 (RQQFRKFCYQ…TLLEDLEREF (83 aa)). Residues Lys55, Lys171, Lys202, and Lys252 each participate in a glycyl lysine isopeptide (Lys-Gly) (interchain with G-Cter in SUMO2) cross-link. The disordered stretch occupies residues 197-242 (DISGEKSQRLSQEPSFGGFSEHKSSLEWQQGSAPGETLRRSPSQRA). 9 C2H2-type zinc fingers span residues 285–307 (YRCD…QRIH), 313–335 (YKCN…QRIH), 341–363 (YECS…RKIH), 369–391 (CKCN…QRIH), 397–419 (YECN…QRIH), 425–447 (YECN…QRIH), 453–475 (YECN…QRIH), 481–503 (YQCN…QRIH), and 509–531 (YICS…QRVH).

It belongs to the krueppel C2H2-type zinc-finger protein family.

It localises to the nucleus. Its function is as follows. DNA-dependent transcriptional repressor. This is Zinc finger protein 397 (ZNF397) from Bos taurus (Bovine).